The sequence spans 396 residues: Cysteine protease ATG4A (396 aa).

The active-site Nucleophile is Cys-77. Residues Asp-276 and His-278 contribute to the active site. The LIR motif lies at 390-393; that stretch reads FEIL.

This sequence belongs to the peptidase C54 family. Interacts with ATG9A; the interaction is direct.

Its subcellular location is the cytoplasm. The catalysed reaction is [protein]-C-terminal L-amino acid-glycyl-phosphatidylethanolamide + H2O = [protein]-C-terminal L-amino acid-glycine + a 1,2-diacyl-sn-glycero-3-phosphoethanolamine. With respect to regulation, inhibited by N-ethylmaleimide. Redox-regulated during autophagy since reducing conditions activate ATG4A whereas an oxidizing environment such as the presence of H(2)O(2) inhibits its activity. Functionally, cysteine protease that plays a key role in autophagy by mediating both proteolytic activation and delipidation of ATG8 family proteins. The protease activity is required for proteolytic activation of ATG8 family proteins: cleaves the C-terminal amino acid of ATG8 proteins to reveal a C-terminal glycine. Exposure of the glycine at the C-terminus is essential for ATG8 proteins conjugation to phosphatidylethanolamine (PE) and insertion to membranes, which is necessary for autophagy. Preferred substrate is GABARAPL2 followed by MAP1LC3A and GABARAP. Protease activity is also required to counteract formation of high-molecular weight conjugates of ATG8 proteins (ATG8ylation): acts as a deubiquitinating-like enzyme that removes ATG8 conjugated to other proteins, such as ATG3. In addition to the protease activity, also mediates delipidation of ATG8 family proteins. Catalyzes delipidation of PE-conjugated forms of ATG8 proteins during macroautophagy. Compared to ATG4B, the major protein for proteolytic activation of ATG8 proteins, shows weaker ability to cleave the C-terminal amino acid of ATG8 proteins, while it displays stronger delipidation activity. Involved in phagophore growth during mitophagy independently of its protease activity and of ATG8 proteins: acts by regulating ATG9A trafficking to mitochondria and promoting phagophore-endoplasmic reticulum contacts during the lipid transfer phase of mitophagy. This Mus musculus (Mouse) protein is Cysteine protease ATG4A.